Here is a 103-residue protein sequence, read N- to C-terminus: Co-chaperonin GroES (103 aa).

The protein belongs to the GroES chaperonin family. As to quaternary structure, heptamer of 7 subunits arranged in a ring. Interacts with the chaperonin GroEL.

The protein resides in the cytoplasm. Functionally, together with the chaperonin GroEL, plays an essential role in assisting protein folding. The GroEL-GroES system forms a nano-cage that allows encapsulation of the non-native substrate proteins and provides a physical environment optimized to promote and accelerate protein folding. GroES binds to the apical surface of the GroEL ring, thereby capping the opening of the GroEL channel. This is Co-chaperonin GroES from Microcystis aeruginosa (strain NIES-843 / IAM M-2473).